The sequence spans 485 residues: MEYKLLIGLEVHVQLGLKTKAFCGCKNDFGGIPNSRVCPICLGLPGALPSVNKELVSSAILAGHATNSTIRNIVKFDRKHYAYPDLPKGYQISQNDAPICENGFIFIKTSLGVKRINIARIHMEEDSGKSLHLLSNDNQSYIDFNRAGAPLLEIVSQPDIRSGEEAVAYLNALREIFRYLDLSECSMENGSFRCDVNINLLINENDVNYKTPISEIKNLNSFKSVKLAIDYEESKQKEEWILYRKTLESVGKCTMGFDDKKGITVLQRSKETISDYRYIKDPDLPLIKLESDYIENIKSHRMVELPFDARIRLQEQYGLSDFDVVTLTSDKNLVKYFEEAALTSSEPKKVANWILSEVLSVLNEREIGILDFNLPASYIGELVEFILNGKISGKISKEIFLEMVDRNVSSITIINEKKLEQISDKSFIESIVIEVLNENPKSIELYKKGKSHAVKFMMGQIMRKTSGKVNPVLSNEILMNKLQDV.

It belongs to the GatB/GatE family. GatB subfamily. Heterotrimer of A, B and C subunits.

The enzyme catalyses L-glutamyl-tRNA(Gln) + L-glutamine + ATP + H2O = L-glutaminyl-tRNA(Gln) + L-glutamate + ADP + phosphate + H(+). It catalyses the reaction L-aspartyl-tRNA(Asn) + L-glutamine + ATP + H2O = L-asparaginyl-tRNA(Asn) + L-glutamate + ADP + phosphate + 2 H(+). In terms of biological role, allows the formation of correctly charged Asn-tRNA(Asn) or Gln-tRNA(Gln) through the transamidation of misacylated Asp-tRNA(Asn) or Glu-tRNA(Gln) in organisms which lack either or both of asparaginyl-tRNA or glutaminyl-tRNA synthetases. The reaction takes place in the presence of glutamine and ATP through an activated phospho-Asp-tRNA(Asn) or phospho-Glu-tRNA(Gln). This chain is Aspartyl/glutamyl-tRNA(Asn/Gln) amidotransferase subunit B, found in Borrelia recurrentis (strain A1).